A 2318-amino-acid chain; its full sequence is Neurogenic locus notch homolog protein 3 (2318 aa).

Residues 1–14 (MGLGARGRRRRRRL) show a composition bias toward basic residues. A disordered region spans residues 1–20 (MGLGARGRRRRRRLMALPPP). The first 39 residues, 1-39 (MGLGARGRRRRRRLMALPPPPPPMRALPLLLLLAGLGAA), serve as a signal peptide directing secretion. EGF-like domains lie at 40–78 (APPCLDGSPCANGGRCTHQQPSLEAACLCLPGWVGERCQ), 79–119 (LEDP…PDCS), and 120–157 (QPDPCVSRPCVHGAPCSVGPDGRFACACPPGYQGQSCQ). Residues 40 to 1643 (APPCLDGSPC…PLEAPEQSVP (1604 aa)) are Extracellular-facing. Cystine bridges form between Cys43–Cys55, Cys49–Cys66, Cys68–Cys77, Cys83–Cys94, Cys88–Cys107, Cys109–Cys118, Cys124–Cys135, Cys129–Cys145, Cys147–Cys156, Cys163–Cys175, Cys169–Cys184, Cys186–Cys195, Cys202–Cys213, Cys207–Cys223, Cys225–Cys234, Cys241–Cys252, Cys246–Cys261, Cys263–Cys272, Cys279–Cys292, Cys286–Cys301, Cys303–Cys312, Cys319–Cys330, Cys324–Cys339, Cys341–Cys350, Cys356–Cys367, Cys361–Cys378, Cys380–Cys389, Cys396–Cys409, Cys403–Cys418, Cys420–Cys429, Cys436–Cys447, Cys441–Cys456, Cys458–Cys467, Cys474–Cys485, Cys479–Cys494, Cys496–Cys505, Cys512–Cys523, Cys517–Cys532, Cys534–Cys543, Cys550–Cys560, Cys555–Cys569, Cys571–Cys580, Cys587–Cys598, Cys592–Cys607, Cys609–Cys618, Cys625–Cys635, Cys630–Cys644, Cys646–Cys655, Cys662–Cys673, Cys667–Cys682, Cys684–Cys693, Cys700–Cys710, Cys705–Cys719, Cys721–Cys730, Cys739–Cys750, Cys744–Cys759, Cys761–Cys770, Cys776–Cys787, Cys781–Cys797, Cys799–Cys808, Cys815–Cys827, Cys821–Cys836, Cys838–Cys847, Cys854–Cys865, Cys859–Cys874, Cys876–Cys885, Cys892–Cys902, Cys897–Cys911, Cys913–Cys922, Cys929–Cys940, Cys934–Cys949, Cys951–Cys960, Cys967–Cys978, Cys972–Cys987, Cys989–Cys998, Cys1005–Cys1016, Cys1010–Cys1023, Cys1025–Cys1034, Cys1041–Cys1062, Cys1056–Cys1071, Cys1073–Cys1082, Cys1089–Cys1100, Cys1094–Cys1109, Cys1111–Cys1120, Cys1127–Cys1138, Cys1132–Cys1147, Cys1149–Cys1158, Cys1165–Cys1183, Cys1177–Cys1192, Cys1194–Cys1203, Cys1210–Cys1223, Cys1215–Cys1233, Cys1235–Cys1244, Cys1251–Cys1262, Cys1256–Cys1276, Cys1278–Cys1287, Cys1294–Cys1305, Cys1299–Cys1314, and Cys1316–Cys1325. Residues 159-196 (DIDECRSGTTCRHGGTCLNTPGSFRCQCPLGYTGLLCE) form the EGF-like 4; calcium-binding domain. In terms of domain architecture, EGF-like 5 spans 198-235 (PVVPCAPSPCRNGGTCRQSSDVTYDCACLPGFEGQNCE). The EGF-like 6; calcium-binding domain occupies 237–273 (NVDDCPGHRCLNGGTCVDGVNTYNCQCPPEWTGQFCT). The EGF-like 7 domain occupies 275–313 (DVDECQLQPNACHNGGTCFNLLGGHSCVCVNGWTGESCS). The region spanning 315 to 351 (NIDDCATAVCFHGATCHDRVASFYCACPMGKTGLLCH) is the EGF-like 8; calcium-binding domain. Positions 352–390 (LDDACVSNPCHEDAICDTNPVSGRAICTCPPGFTGGACD) constitute an EGF-like 9 domain. The EGF-like 10; calcium-binding domain occupies 392–430 (DVDECSIGANPCEHLGRCVNTQGSFLCQCGRGYTGPRCE). The 37-residue stretch at 432-468 (DVNECLSGPCRNQATCLDRIGQFTCICMAGFTGTYCE) folds into the EGF-like 11; calcium-binding domain. The EGF-like 12; calcium-binding domain maps to 470–506 (DIDECQSSPCVNGGVCKDRVNGFSCTCPSGFSGSMCQ). The region spanning 508-544 (DVDECASTPCRNGAKCVDQPDGYECRCAEGFEGTLCE) is the EGF-like 13; calcium-binding domain. In terms of domain architecture, EGF-like 14; calcium-binding spans 546–581 (NVDDCSPDPCHHGRCVDGIASFSCACAPGYTGIRCE). In terms of domain architecture, EGF-like 15; calcium-binding spans 583-619 (QVDECRSQPCRYGGKCLDLVDKYLCRCPPGTTGVNCE). Positions 621 to 656 (NIDDCASNPCTFGVCRDGINRYDCVCQPGFTGPLCN) constitute an EGF-like 16; calcium-binding domain. Residues 658 to 694 (EINECASSPCGEGGSCVDGENGFHCLCPPGSLPPLCL) enclose the EGF-like 17; calcium-binding domain. 3 EGF-like domains span residues 696-731 (ANHPCAHKPCSHGVCHDAPGGFRCVCEPGWSGPRCS), 735-771 (APDACESQPCQAGGTCTSDGIGFRCTCAPGFQGHQCE), and 772-809 (VLSPCTPSLCEHGGHCESDPDRLTVCSCPPGWQGPRCQ). Residues 811-848 (DVDECAGASPCGPHGTCTNLPGNFRCICHRGYTGPFCD) enclose the EGF-like 21; calcium-binding domain. Positions 850–886 (DIDDCDPNPCLHGGSCQDGVGSFSCSCLDGFAGPRCA) constitute an EGF-like 22; calcium-binding domain. Residues 888–923 (DVDECLSSPCGPGTCTDHVASFTCACPPGYGGFHCE) form the EGF-like 23; calcium-binding domain. EGF-like domains lie at 925–961 (DLPDCSPSSCFNGGTCVDGVSSFSCLCRPGYTGTHCQ), 963–999 (EADPCFSRPCLHGGICNPTHPGFECTCREGFTGSQCQ), 1001–1035 (PVDWCSQAPCQNGGRCVQTGAYCICPPGWSGRLCD), 1037–1083 (QSLP…SHCE), and 1085–1121 (EVDPCTAQPCQHGGTCRGYMGGYVCECPAGYAGDSCE). The EGF-like 29; calcium-binding domain occupies 1123–1159 (NIDECASQPCQNGGSCIDLVARYLCSCPPGTLGVLCE). The EGF-like 30; calcium-binding domain maps to 1161 to 1204 (NEDDCDLGPSLDSGVQCLHNGTCVDLVGGFRCNCPPGYTGLHCE). Residue Asn1180 is glycosylated (N-linked (GlcNAc...) asparagine). EGF-like domains follow at residues 1206-1245 (DINECRPGACHAAHTRDCLQDPGGHFRCVCHPGFTGPRCQ), 1247-1288 (ALSP…LRCE), 1290-1326 (VARSCRELQCPVGIPCQQTARGPRCACPPGLSGPSCR), and 1336-1374 (TNASCASAPCLHGGSCLPVQSVPFFRCVCAPGWGGPRCE). An N-linked (GlcNAc...) asparagine glycan is attached at Asn1337. 12 cysteine pairs are disulfide-bonded: Cys1340–Cys1351, Cys1345–Cys1362, Cys1364–Cys1373, Cys1388–Cys1411, Cys1393–Cys1406, Cys1402–Cys1418, Cys1429–Cys1452, Cys1434–Cys1447, Cys1443–Cys1459, Cys1468–Cys1494, Cys1476–Cys1489, and Cys1485–Cys1501. LNR repeat units follow at residues 1388–1428 (CPRA…PWRQ), 1429–1466 (CEALQCWRLFNNSRCDPACSSPACLYDNFDCYSGGRDR), and 1468–1506 (CNPVYEKYCADHFADGRCDQGCNTEECGWDGLDCASEVP). N-linked (GlcNAc...) asparagine glycosylation is present at Asn1439. Residues 1644-1664 (LLPLLVAGAVFLLIIFILGVM) form a helical membrane-spanning segment. The Cytoplasmic segment spans residues 1665-2318 (VARRKREHST…EVTPKRQVMA (654 aa)). ANK repeat units follow at residues 1839–1868 (TGETALHLAARYARADAAKRLLDAGADTNA), 1872–1902 (SGRTPLHTAVTADAQGVFQILIRNRSTDLDA), 1906–1935 (DGSTALILAARLAVEGMVEELIASHADVNA), 1939–1968 (LGKSALHWAAAVNNVEATLALLKNGANKDM), and 1972–2001 (KEETPLFLAAREGSYEAAKLLLDHLANREI). 2 disordered regions span residues 2025-2045 (LDQPSGPRSPSGPHGLGPLLC) and 2058-2126 (QSGT…PLEG). The span at 2028–2045 (PSGPRSPSGPHGLGPLLC) shows a compositional bias: low complexity. Omega-N-methylarginine is present on Arg2174. The span at 2184-2193 (SFLLPLAPGP) shows a compositional bias: low complexity. A disordered region spans residues 2184 to 2318 (SFLLPLAPGP…EVTPKRQVMA (135 aa)). The PEST-like stretch occupies residues 2242 to 2261 (HPYLTPSPESPEHWASPSPP). The segment covering 2262–2282 (SLSDWSDSTPSPATATNATAS) has biased composition (low complexity). Positions 2296-2305 (SLPQSQTQLG) are enriched in polar residues.

It belongs to the NOTCH family. In terms of assembly, interacts with PSMA1. Heterodimer of a C-terminal fragment N(TM) and a N-terminal fragment N(EC) which are probably linked by disulfide bonds. Interacts with MAML1, MAML2 and MAML3 which act as transcriptional coactivators for NOTCH3. Interacts with HIF1AN. Synthesized in the endoplasmic reticulum as an inactive form which is proteolytically cleaved by a furin-like convertase in the trans-Golgi network before it reaches the plasma membrane to yield an active, ligand-accessible form. Cleavage results in a C-terminal fragment N(TM) and a N-terminal fragment N(EC). Following ligand binding, it is cleaved by TNF-alpha converting enzyme (TACE) to yield a membrane-associated intermediate fragment called notch extracellular truncation (NEXT). This fragment is then cleaved by presenilin dependent gamma-secretase to release a notch-derived peptide containing the intracellular domain (NICD) from the membrane. Post-translationally, phosphorylated. In terms of processing, hydroxylated by HIF1AN. In terms of tissue distribution, proliferating neuroepithelium.

The protein resides in the cell membrane. Its subcellular location is the nucleus. In terms of biological role, functions as a receptor for membrane-bound ligands Jagged1, Jagged2 and Delta1 to regulate cell-fate determination. Upon ligand activation through the released notch intracellular domain (NICD) it forms a transcriptional activator complex with RBPJ/RBPSUH and activates genes of the enhancer of split locus. Affects the implementation of differentiation, proliferation and apoptotic programs. May play a role during CNS development. This chain is Neurogenic locus notch homolog protein 3 (Notch3), found in Mus musculus (Mouse).